A 288-amino-acid chain; its full sequence is 4-diphosphocytidyl-2-C-methyl-D-erythritol kinase (288 aa).

K8 is an active-site residue. 92–102 (PVAAGMAGGST) contributes to the ATP binding site. D134 is a catalytic residue.

It belongs to the GHMP kinase family. IspE subfamily.

It catalyses the reaction 4-CDP-2-C-methyl-D-erythritol + ATP = 4-CDP-2-C-methyl-D-erythritol 2-phosphate + ADP + H(+). Its pathway is isoprenoid biosynthesis; isopentenyl diphosphate biosynthesis via DXP pathway; isopentenyl diphosphate from 1-deoxy-D-xylulose 5-phosphate: step 3/6. In terms of biological role, catalyzes the phosphorylation of the position 2 hydroxy group of 4-diphosphocytidyl-2C-methyl-D-erythritol. This is 4-diphosphocytidyl-2-C-methyl-D-erythritol kinase from Clostridium perfringens (strain SM101 / Type A).